A 335-amino-acid chain; its full sequence is Probable calcium-binding protein CML49 (335 aa).

The span at 1–10 shows a compositional bias: low complexity; the sequence is MSGYPPSSQG. The tract at residues 1–154 is disordered; the sequence is MSGYPPSSQG…PQASYGSPFA (154 aa). Over residues 30 to 45 the composition is skewed to pro residues; that stretch reads NPPPYGSSGSNPPPPY. Over residues 46–63 the composition is skewed to low complexity; that stretch reads GSSASSPYAVPYGAQPAP. The span at 110–141 shows a compositional bias: gly residues; it reads DYGGYGGAPQQSGHGGGYGGAPQQSGHGGGYG. EF-hand domains lie at 164–199 and 230–265; these read GTDP…YNQS and FSLQ…LGFS. Ca(2+)-binding residues include aspartate 177, aspartate 179, serine 181, glutamate 188, aspartate 243, aspartate 245, serine 247, arginine 249, and glutamate 254.

In terms of biological role, potential calcium sensor. The sequence is that of Probable calcium-binding protein CML49 (CML49) from Arabidopsis thaliana (Mouse-ear cress).